Here is a 65-residue protein sequence, read N- to C-terminus: Conotoxin Cal1.5 (65 aa).

Positions 1-18 (MRCLPVFIILLLLASTAA) are cleaved as a signal peptide. Positions 19-49 (VDVAGSKLKRRLERKPYQGSQAYVKKTAFGL) are excised as a propeptide. 2 cysteine pairs are disulfide-bonded: cysteine 52–cysteine 62 and cysteine 53–cysteine 59. Proline 61 is subject to 4-hydroxyproline.

This sequence belongs to the conotoxin T superfamily. As to expression, expressed by the venom duct.

It is found in the secreted. In terms of biological role, probable neurotoxin with unknown target. Possibly targets ion channels. The polypeptide is Conotoxin Cal1.5 (Californiconus californicus (California cone)).